Here is a 114-residue protein sequence, read N- to C-terminus: Protein LLP homolog (114 aa).

2 stretches are compositionally biased toward basic residues: residues 1–21 (MAKS…RKKN) and 91–108 (QRKK…KSKL). Disordered stretches follow at residues 1-23 (MAKS…KNAP) and 91-114 (QRKK…GLAW).

The protein belongs to the learning-associated protein family.

The protein resides in the nucleus. It localises to the nucleolus. Its subcellular location is the chromosome. In terms of biological role, regulates dendritic and spine growth and synaptic transmission. In Gallus gallus (Chicken), this protein is Protein LLP homolog (LLPH).